A 393-amino-acid polypeptide reads, in one-letter code: Pyrimidine monooxygenase RutA (393 aa).

Residues 79-80, Asn145, Glu154, 170-171, and Ser220 contribute to the FMN site; these read IK and RY.

The protein belongs to the NtaA/SnaA/DszA monooxygenase family. RutA subfamily.

The catalysed reaction is uracil + FMNH2 + NADH + O2 = (Z)-3-ureidoacrylate + FMN + NAD(+) + H2O + H(+). It carries out the reaction thymine + FMNH2 + NADH + O2 = (Z)-2-methylureidoacrylate + FMN + NAD(+) + H2O + H(+). Functionally, catalyzes the pyrimidine ring opening between N-3 and C-4 by an unusual flavin hydroperoxide-catalyzed mechanism, adding oxygen atoms in the process to yield ureidoacrylate peracid, that immediately reacts with FMN forming ureidoacrylate and FMN-N(5)-oxide. The FMN-N(5)-oxide reacts spontaneously with NADH to produce FMN. Requires the flavin reductase RutF to regenerate FMN in vivo. This chain is Pyrimidine monooxygenase RutA, found in Escherichia coli O6:H1 (strain CFT073 / ATCC 700928 / UPEC).